Reading from the N-terminus, the 488-residue chain is MEAAMLQPQSVAQAFLNNREFKSDARKAYLFQQMPATPIYSRPGSSCSQPPTLYSNGAHKTTMLDADVYDSHFPSTPPLSTSGSAIGSPKMFDALQTPINPMFSGLDGFPGKDLFDSVETSVLDWSSCASPPMTPVYIASHPLALQQSTSDLVSMTSCPSLSPSPSPAYARSIASEQDVDFCDPRNLTVSTGNPTLAPEFTLSNMGDADVKGANARPTFDFNPAISHDLPSFQNLDDLDSEDDFSNLVNIEATATGETTRPRACTGSSVVSLGHCSFDDELAFDDNDTFSFLPFPSADATTDVDDGHRDKKLKTSPKNDAVVASEPTDDEVEATSAASVSSESTVSSPSDDNSPTVSAPSRRGRKQSLTEDPSKTFVCDLCNRRFRRQEHLKRHYRSLHTQEKPFECNECGKKFSRSDNLAQHARTHSGGAIVMDLIEDHASHFDGSAMPVNAGDEFSYGKVMFQIGSEVSEITEDASDNKKKRKRTD.

2 consecutive C2H2-type zinc fingers follow at residues 376–399 (FVCD…RSLH) and 405–427 (FECN…ARTH).

Its subcellular location is the nucleus. The protein resides in the cytoplasm. Its function is as follows. Transcription factor that acts as a key downstream transcription factor in the HOG1-MAPK pathway. Plays crucial roles in the regulation of conidiation, virulence and multi-stress responses. Acts as a negative regulator of proteases, lipases, as well as of the red-pigmented oosporein production, and contributes to virulence and growth in response to external pH. Contributes to the ability to infect Rhipicephalus microplus (Acari, Ixodidae) via the cuticle-penetration requiring route involving proteolytic activity at the host cuticle. Does not seem to be involved in subsequent growth and proliferation once the tick cuticle has been breached. This Beauveria bassiana (strain ARSEF 2860) (White muscardine disease fungus) protein is C2H2-type transcription factor MSN2.